Consider the following 481-residue polypeptide: MTSPVENSTSTEKLTLAEKVWRDHVVSKGENGEPDLLYIDLQLLHEVTSPQAFDGLRMTGRKLRHPELHLATEDHNVPTEGIKTGSLLEINDKISRLQVSTLRDNCEEFGVRLHPMGDVRQGIVHTVGPQLGATQPGMTIVCGDSHTSTHGAFGSMAFGIGTSEVEHVMATQTLPLKPFKTMAIEVTGELQPGVSSKDLILAIIAKIGTGGGQGYVLEYRGEAIRKMSMDARMTMCNMSIEAGARAGMIAPDQTTFDYVEGREMAPKGADWDEAVAYWKTLPTDEGATFDKVVEIDGSALTPFITWGTNPGQGLPLGESVPSPEDFTNDNDKAAAEKALQYMDLVPGTPLRDIKIDTVFLGSCTNARIEDLQIAADILKGHKIADGMRMMVVPSSTWIKQEAEALGLDKIFTDAGAEWRTAGCSMCLGMNPDQLKPGERSASTSNRNFEGRQGPGGRTHLVSPAVAAATAIRGTLSSPADI.

Cys-363, Cys-423, and Cys-426 together coordinate [4Fe-4S] cluster. The interval Asp-432–His-459 is disordered.

This sequence belongs to the aconitase/IPM isomerase family. LeuC type 1 subfamily. In terms of assembly, heterodimer of LeuC and LeuD. [4Fe-4S] cluster is required as a cofactor.

The enzyme catalyses (2R,3S)-3-isopropylmalate = (2S)-2-isopropylmalate. Its pathway is amino-acid biosynthesis; L-leucine biosynthesis; L-leucine from 3-methyl-2-oxobutanoate: step 2/4. Functionally, catalyzes the isomerization between 2-isopropylmalate and 3-isopropylmalate, via the formation of 2-isopropylmaleate. The polypeptide is 3-isopropylmalate dehydratase large subunit (Corynebacterium glutamicum (strain ATCC 13032 / DSM 20300 / JCM 1318 / BCRC 11384 / CCUG 27702 / LMG 3730 / NBRC 12168 / NCIMB 10025 / NRRL B-2784 / 534)).